The chain runs to 111 residues: MNQLQNLAEALSASSPVSGTVQTVVDGNTTTTTTTNTGLGVVAVGAGLAMIGAIGSGLGQGYAAGKTVEAVGRNPEMISKIRATFIIGAGIAETASIYSFIVALLLIFVGK.

A run of 2 helical transmembrane segments spans residues 38–58 (GLGV…GSGL) and 89–109 (AGIA…LIFV).

It belongs to the ATPase C chain family. F-type ATPases have 2 components, F(1) - the catalytic core - and F(0) - the membrane proton channel. F(1) has five subunits: alpha(3), beta(3), gamma(1), delta(1), epsilon(1). F(0) has three main subunits: a(1), b(2) and c(10-14). The alpha and beta chains form an alternating ring which encloses part of the gamma chain. F(1) is attached to F(0) by a central stalk formed by the gamma and epsilon chains, while a peripheral stalk is formed by the delta and b chains.

Its subcellular location is the cell membrane. In terms of biological role, f(1)F(0) ATP synthase produces ATP from ADP in the presence of a proton or sodium gradient. F-type ATPases consist of two structural domains, F(1) containing the extramembraneous catalytic core and F(0) containing the membrane proton channel, linked together by a central stalk and a peripheral stalk. During catalysis, ATP synthesis in the catalytic domain of F(1) is coupled via a rotary mechanism of the central stalk subunits to proton translocation. Key component of the F(0) channel; it plays a direct role in translocation across the membrane. A homomeric c-ring of between 10-14 subunits forms the central stalk rotor element with the F(1) delta and epsilon subunits. The protein is ATP synthase subunit c of Mycoplasmopsis synoviae (strain 53) (Mycoplasma synoviae).